Consider the following 99-residue polypeptide: ATP-dependent Clp protease adapter protein ClpS (99 aa).

The protein belongs to the ClpS family. In terms of assembly, binds to the N-terminal domain of the chaperone ClpA.

Its function is as follows. Involved in the modulation of the specificity of the ClpAP-mediated ATP-dependent protein degradation. The protein is ATP-dependent Clp protease adapter protein ClpS of Acetivibrio thermocellus (strain ATCC 27405 / DSM 1237 / JCM 9322 / NBRC 103400 / NCIMB 10682 / NRRL B-4536 / VPI 7372) (Clostridium thermocellum).